Reading from the N-terminus, the 236-residue chain is Opacity protein opA50 (236 aa).

A signal peptide is located at residue Ala1.

Belongs to the opacity porin family.

Its subcellular location is the cell outer membrane. Its function is as follows. Implicated in a number of adherence functions. OPA proteins are implicated in pathogenesis and are subject to phase variation. The protein is Opacity protein opA50 (opaC) of Neisseria gonorrhoeae.